Consider the following 309-residue polypeptide: Ribosomal RNA small subunit methyltransferase H (309 aa).

Residues 33 to 35 (GGH), aspartate 53, phenylalanine 79, aspartate 100, and glutamine 107 contribute to the S-adenosyl-L-methionine site.

Belongs to the methyltransferase superfamily. RsmH family.

The protein localises to the cytoplasm. It carries out the reaction cytidine(1402) in 16S rRNA + S-adenosyl-L-methionine = N(4)-methylcytidine(1402) in 16S rRNA + S-adenosyl-L-homocysteine + H(+). Specifically methylates the N4 position of cytidine in position 1402 (C1402) of 16S rRNA. The protein is Ribosomal RNA small subunit methyltransferase H of Clostridium botulinum (strain Kyoto / Type A2).